The sequence spans 202 residues: MPIEISANSRNLHGTGANRRLRIQGRLPGVIYGGGGTAQPIDLDHKDLYYKLKTDVFHASILSINVDGKKEQVLLRDVQMHPFKQQVLHIDFQRIRQDQKIHVKVPLHFINADIAPGVKLSGGMISHVATEIEISCLPKDLPESITVDLSEMTAGSILHTSDLKLPENVEIPALLRGDNQPVSTLIMPRGGEVADESGEESA.

It belongs to the bacterial ribosomal protein bL25 family. CTC subfamily. Part of the 50S ribosomal subunit; part of the 5S rRNA/L5/L18/L25 subcomplex. Contacts the 5S rRNA. Binds to the 5S rRNA independently of L5 and L18.

Functionally, this is one of the proteins that binds to the 5S RNA in the ribosome where it forms part of the central protuberance. This is Large ribosomal subunit protein bL25 from Nitrosomonas eutropha (strain DSM 101675 / C91 / Nm57).